Reading from the N-terminus, the 472-residue chain is MQIGKYSLGDPIAAIATALSPAALGIVRTSGEGAIDLASAIFSKPKKLKEAQGNSILHGWVLDPESKKEVDEVTVCVYREPKSFTGEDSVEFICHGGTAVVLKIYRLLIENGFRAAEGGEFTFRAFANGKADLTRAEAVNEIINSKTDINIELAAGRLSGNLFSGIEEIKHELTAVIAAADVEIEYPEDEETSQGAFSPDLILRIIEPLKDLADSWAAEKIFIQGAKVVLAGKTNAGKSSLFNALLKEDRAIVSDIHGTTRDWLEASLNFNGIPVSLYDTAGIRYTQDSIEAIGVERSLEMSRNADLILYLCDPKDILSAGSLNKDDSEFIKNAKAPVITVITKEDLLDTESKEKIKEILKAEKIAEPIIISSKASNGIKALSEKAYSVLAKNTGSSGFSKTASLGSERQRDAVQKALDVLQTAYQNSLEGFPLDLIVEDLEEALSFLGEITGEVRSDDILDKVFSGFCVGK.

3 residues coordinate (6S)-5-formyl-5,6,7,8-tetrahydrofolate: R28, E91, and K130. Residues 225–391 enclose the TrmE-type G domain; the sequence is GAKVVLAGKT…LSEKAYSVLA (167 aa). N235 serves as a coordination point for K(+). GTP is bound by residues 235-240, 254-260, and 279-282; these read NAGKSS, SDIHGTT, and DTAG. Residue S239 participates in Mg(2+) binding. Positions 254, 256, and 259 each coordinate K(+). T260 serves as a coordination point for Mg(2+). K472 lines the (6S)-5-formyl-5,6,7,8-tetrahydrofolate pocket.

This sequence belongs to the TRAFAC class TrmE-Era-EngA-EngB-Septin-like GTPase superfamily. TrmE GTPase family. As to quaternary structure, homodimer. Heterotetramer of two MnmE and two MnmG subunits. It depends on K(+) as a cofactor.

The protein localises to the cytoplasm. Functionally, exhibits a very high intrinsic GTPase hydrolysis rate. Involved in the addition of a carboxymethylaminomethyl (cmnm) group at the wobble position (U34) of certain tRNAs, forming tRNA-cmnm(5)s(2)U34. The protein is tRNA modification GTPase MnmE of Treponema denticola (strain ATCC 35405 / DSM 14222 / CIP 103919 / JCM 8153 / KCTC 15104).